A 454-amino-acid polypeptide reads, in one-letter code: Probable glycine dehydrogenase (decarboxylating) subunit 1 (454 aa).

This sequence belongs to the GcvP family. N-terminal subunit subfamily. In terms of assembly, the glycine cleavage system is composed of four proteins: P, T, L and H. In this organism, the P 'protein' is a heterodimer of two subunits.

The catalysed reaction is N(6)-[(R)-lipoyl]-L-lysyl-[glycine-cleavage complex H protein] + glycine + H(+) = N(6)-[(R)-S(8)-aminomethyldihydrolipoyl]-L-lysyl-[glycine-cleavage complex H protein] + CO2. The glycine cleavage system catalyzes the degradation of glycine. The P protein binds the alpha-amino group of glycine through its pyridoxal phosphate cofactor; CO(2) is released and the remaining methylamine moiety is then transferred to the lipoamide cofactor of the H protein. The sequence is that of Probable glycine dehydrogenase (decarboxylating) subunit 1 from Sorangium cellulosum (strain So ce56) (Polyangium cellulosum (strain So ce56)).